The chain runs to 510 residues: Light-independent protochlorophyllide reductase subunit B (510 aa).

Asp36 is a binding site for [4Fe-4S] cluster. Asp297 (proton donor) is an active-site residue. 432–433 lines the substrate pocket; sequence GM.

It belongs to the ChlB/BchB/BchZ family. As to quaternary structure, protochlorophyllide reductase is composed of three subunits; ChlL, ChlN and ChlB. Forms a heterotetramer of two ChlB and two ChlN subunits. [4Fe-4S] cluster is required as a cofactor.

Its subcellular location is the plastid. The protein localises to the chloroplast. The enzyme catalyses chlorophyllide a + oxidized 2[4Fe-4S]-[ferredoxin] + 2 ADP + 2 phosphate = protochlorophyllide a + reduced 2[4Fe-4S]-[ferredoxin] + 2 ATP + 2 H2O. Its pathway is porphyrin-containing compound metabolism; chlorophyll biosynthesis (light-independent). Its function is as follows. Component of the dark-operative protochlorophyllide reductase (DPOR) that uses Mg-ATP and reduced ferredoxin to reduce ring D of protochlorophyllide (Pchlide) to form chlorophyllide a (Chlide). This reaction is light-independent. The NB-protein (ChlN-ChlB) is the catalytic component of the complex. This is Light-independent protochlorophyllide reductase subunit B from Pinus thunbergii (Japanese black pine).